Consider the following 334-residue polypeptide: DNA-directed RNA polymerase subunit alpha (334 aa).

Residues 1 to 231 (MNMIKIEPYI…KQMSIFGVDL (231 aa)) form an alpha N-terminal domain (alpha-NTD) region. The alpha C-terminal domain (alpha-CTD) stretch occupies residues 247–334 (ELKTLMIKID…NRKLAKLKSN (88 aa)).

The protein belongs to the RNA polymerase alpha chain family. In terms of assembly, homodimer. The RNAP catalytic core consists of 2 alpha, 1 beta/beta' and 1 omega subunit. When a sigma factor is associated with the core the holoenzyme is formed, which can initiate transcription.

The enzyme catalyses RNA(n) + a ribonucleoside 5'-triphosphate = RNA(n+1) + diphosphate. DNA-dependent RNA polymerase catalyzes the transcription of DNA into RNA using the four ribonucleoside triphosphates as substrates. The sequence is that of DNA-directed RNA polymerase subunit alpha from Helicobacter hepaticus (strain ATCC 51449 / 3B1).